Consider the following 240-residue polypeptide: Uridylate kinase (240 aa).

14–17 (KLSG) provides a ligand contact to ATP. Gly-56 is a binding site for UMP. ATP is bound by residues Gly-57 and Arg-61. UMP is bound by residues Asp-76 and 137-144 (TGNPFFTT). Positions 164, 170, and 173 each coordinate ATP.

It belongs to the UMP kinase family. Homohexamer.

The protein localises to the cytoplasm. It carries out the reaction UMP + ATP = UDP + ADP. It participates in pyrimidine metabolism; CTP biosynthesis via de novo pathway; UDP from UMP (UMPK route): step 1/1. Inhibited by UTP. Catalyzes the reversible phosphorylation of UMP to UDP. This chain is Uridylate kinase, found in Acidovorax sp. (strain JS42).